The following is a 510-amino-acid chain: NAD(P)H-quinone oxidoreductase subunit 2 A, chloroplastic (510 aa).

Transmembrane regions (helical) follow at residues 24–44, 57–77, 99–119, 124–144, 149–169, 183–203, 227–247, 295–315, 323–343, 354–374, 395–415, 418–438, and 484–504; these read LLLF…GLIL, IPWL…ALLF, IFQF…VEYI, MAIT…MFLC, LITI…LSGY, YLLM…WLYG, PGIS…LSPA, WHLL…LIAI, MLAY…IVGD, YMLF…LFGL, ALSL…AGFF, LYLF…IGLL, and MIVC…IIAI.

The protein belongs to the complex I subunit 2 family. NDH is composed of at least 16 different subunits, 5 of which are encoded in the nucleus.

Its subcellular location is the plastid. The protein localises to the chloroplast thylakoid membrane. The catalysed reaction is a plastoquinone + NADH + (n+1) H(+)(in) = a plastoquinol + NAD(+) + n H(+)(out). The enzyme catalyses a plastoquinone + NADPH + (n+1) H(+)(in) = a plastoquinol + NADP(+) + n H(+)(out). In terms of biological role, NDH shuttles electrons from NAD(P)H:plastoquinone, via FMN and iron-sulfur (Fe-S) centers, to quinones in the photosynthetic chain and possibly in a chloroplast respiratory chain. The immediate electron acceptor for the enzyme in this species is believed to be plastoquinone. Couples the redox reaction to proton translocation, and thus conserves the redox energy in a proton gradient. The sequence is that of NAD(P)H-quinone oxidoreductase subunit 2 A, chloroplastic from Solanum bulbocastanum (Wild potato).